A 284-amino-acid chain; its full sequence is Homoserine O-acetyltransferase 2 (284 aa).

The Acyl-thioester intermediate role is filled by C133. K154 and S178 together coordinate substrate. H220 serves as the catalytic Proton acceptor. The active site involves E222. Residue R234 participates in substrate binding.

This sequence belongs to the MetA family.

The protein localises to the cytoplasm. The catalysed reaction is L-homoserine + acetyl-CoA = O-acetyl-L-homoserine + CoA. It functions in the pathway amino-acid biosynthesis; L-methionine biosynthesis via de novo pathway; O-acetyl-L-homoserine from L-homoserine: step 1/1. Transfers an acetyl group from acetyl-CoA to L-homoserine, forming acetyl-L-homoserine. This chain is Homoserine O-acetyltransferase 2, found in Ilyobacter polytropus (strain ATCC 51220 / DSM 2926 / LMG 16218 / CuHBu1).